Consider the following 376-residue polypeptide: C-type lectin domain family 4 member M (376 aa).

Residues 1-49 (MSDSKEPRVQQLGLLEEDPTTSGIRLFPRDFQFQQIHGHKSSTGCLGHG) are Cytoplasmic-facing. The Endocytosis signal motif lies at 14 to 15 (LL). The helical; Signal-anchor for type II membrane protein transmembrane segment at 50 to 70 (ALVLQLLSFTLLAGVLVAILV) threads the bilayer. At 71 to 376 (QVSKVPSSLS…KKPTVCFRDE (306 aa)) the chain is on the extracellular side. The N-linked (GlcNAc...) asparagine glycan is linked to N92. 6 tandem repeats follow at residues 108–130 (KLQEIYQELTQLKAAVGELPEKS), 131–153 (KLQEIYQELTQLKAAVGELPEKS), 154–176 (KLQEIYQELTQLKAAVGELPEKS), 177–199 (KLQEIYQELTRLKAAVGELPEKS), 200–222 (KLQEIYQELTQLKAALGKLPDQS), and 223–245 (KQQQIYQELTDLKTAFERLCRHC). The 6 X approximate tandem repeats stretch occupies residues 108-246 (KLQEIYQELT…AFERLCRHCP (139 aa)). 4 disulfides stabilise this stretch: C242–C372, C245–C256, C273–C366, and C345–C358. Positions 251-367 (FFQGNCYFMS…CDVDNYWICK (117 aa)) constitute a C-type lectin domain. E336, N338, S340, E343, N354, and D355 together coordinate Ca(2+). N-linked (GlcNAc...) asparagine glycosylation occurs at N338.

Homotetramer.

The protein resides in the membrane. Probable pathogen-recognition receptor involved in peripheral immune surveillance in liver. May mediate the endocytosis of pathogens which are subsequently degraded in lysosomal compartments. Probably recognizes in a calcium-dependent manner high mannose N-linked oligosaccharides in a variety of pathogen antigens. Is a receptor for ICAM3, probably by binding to mannose-like carbohydrates. This is C-type lectin domain family 4 member M (CLEC4M) from Gorilla gorilla gorilla (Western lowland gorilla).